Reading from the N-terminus, the 731-residue chain is EF-hand calcium-binding domain-containing protein 4B (731 aa).

The segment at 1–45 (MAAPDGRVVSRPQRLGQGSGQGPKGSGACLHPLDSLEQKETQEQT) is disordered. One can recognise an EF-hand domain in the interval 84 to 119 (LSLEELEDVFDALDADGNGYLTPQEFTTGFSHFFFS). Positions 97, 99, 101, 103, and 108 each coordinate Ca(2+). A coiled-coil region spans residues 201–382 (LTRIISQLQE…RERNKHLRDE (182 aa)). Residues 349-540 (MEVYRVTESL…ALCKEESSPS (192 aa)) form a proline-rich domain (PRD) which mediates interaction with VAV1 region. 2 disordered regions span residues 426–466 (SEEE…PYPR) and 494–528 (CSEEEEVSDQGVQGQIPEAPPLKLTPTSPRGQPVG). GTP-binding residues include Ser554, Val556, Gly557, Lys558, Thr559, Ser560, Ser571, Pro572, and Thr577. Residue Thr559 coordinates Mg(2+). The segment at 572–580 (PGMAATVGI) is switch-I. Mg(2+) contacts are provided by Thr577 and Asp600. GTP is bound by residues Gly603, Asn658, Lys659, Asp661, and Ala689. The tract at residues 603–619 (GQERYRCITQQFFRKAD) is switch-II. Residue Cys729 is the site of S-geranylgeranyl cysteine attachment.

The protein belongs to the EFCAB4 family. In terms of assembly, interacts with ORAI1 and STIM1; the interaction is direct and takes place in absence of Ca(2+). Forms a complex with ORAI1 and STIM1 at low concentration of Ca(2+), the complex dissociates at elevated Ca(2+) concentrations. Interacts with ORAI2 and ORAI3. As to quaternary structure, interacts with DYNC1H1. Interacts with the dynein-dynactin complex in a Ca(2+)-dependent manner. Interacts with VAV1. Mg(2+) serves as cofactor. As to expression, expressed in the Jurkat T-cell line. Expressed in endothelial cells. Expressed in Weibel-Palade bodies (which are P-selectin/SELP negative) in endothelial cells. Expressed in the Jurkat T-cell line.

It is found in the cytoplasm. The protein localises to the cytoskeleton. The protein resides in the microtubule organizing center. It localises to the cell membrane. Its subcellular location is the golgi apparatus membrane. It is found in the golgi apparatus. The protein localises to the trans-Golgi network membrane. The protein resides in the vesicle. The catalysed reaction is GTP + H2O = GDP + phosphate + H(+). In terms of biological role, ca(2+)-binding protein that plays a key role in store-operated Ca(2+) entry (SOCE) in T-cells by regulating CRAC channel activation. Acts as a cytoplasmic calcium-sensor that facilitates the clustering of ORAI1 and STIM1 at the junctional regions between the plasma membrane and the endoplasmic reticulum upon low Ca(2+) concentration. It thereby regulates CRAC channel activation, including translocation and clustering of ORAI1 and STIM1. Upon increase of cytoplasmic Ca(2+) resulting from opening of CRAC channels, dissociates from ORAI1 and STIM1, thereby destabilizing the ORAI1-STIM1 complex. Functionally, rab GTPase that mediates the trafficking of Weibel-Palade bodies (WPBs) to microtubule organizing center (MTOC) in endothelial cells in response to acute inflammatory stimuli. During histamine (but not thrombin) stimulation of endothelial cells, the dynein-bound form induces retrograde transport of a subset of WPBs along microtubules to the MTOC in a Ca(2+)-independent manner and its GTPase activity is essential for this function. Ca(2+)-regulated dynein adapter protein that activates dynein-mediated transport and dynein-dynactin motility on microtubules and regulates endosomal trafficking of CD47. Acts as an intracellular signaling module bridging two important T-cell receptor (TCR) signaling pathways, Ca(2+)-NFAT and JNK, to affect T-cell activation. In resting T-cells, is predominantly localized near TGN network in a GTP-bound form, upon TCR stimulation, localizes at the immunological synapse via interaction with VAV1 to activate downstream Ca(2+)-NFAT and JNK signaling pathways. Plays a role in T-helper 1 (Th1) cell differentiation and T-helper 17 (Th17) cell effector function. Plays a role in store-operated Ca(2+) entry (SOCE) in T-cells by regulating CRAC channel activation. This is EF-hand calcium-binding domain-containing protein 4B from Homo sapiens (Human).